We begin with the raw amino-acid sequence, 153 residues long: Ribonuclease H (153 aa).

The RNase H type-1 domain maps to 1–142; sequence MTDQIEIFTD…ADELARRGVD (142 aa). The Mg(2+) site is built by Asp-10, Glu-48, Asp-70, and Asp-134.

It belongs to the RNase H family. In terms of assembly, monomer. Mg(2+) is required as a cofactor.

Its subcellular location is the cytoplasm. The catalysed reaction is Endonucleolytic cleavage to 5'-phosphomonoester.. In terms of biological role, endonuclease that specifically degrades the RNA of RNA-DNA hybrids. This is Ribonuclease H from Aromatoleum aromaticum (strain DSM 19018 / LMG 30748 / EbN1) (Azoarcus sp. (strain EbN1)).